The following is a 79-amino-acid chain: Conotoxin Tr6.3 (79 aa).

Positions 1–22 (MKLTCVLIISVLFLTASQLITA) are cleaved as a signal peptide. The propeptide occupies 23–47 (VYSRDKQQYRAARLRDEMRNLKGAR). Disulfide bonds link cysteine 49–cysteine 62, cysteine 56–cysteine 67, and cysteine 61–cysteine 77. 4-hydroxyproline is present on residues proline 60 and proline 63.

This sequence belongs to the conotoxin O1 superfamily. Expressed by the venom duct.

The protein localises to the secreted. Its function is as follows. Ion channel inhibitor that inhibits the increase in intracellular calcium upon depolarization in DRG neurons. In vivo, both intraperitoneal and intracranial injections into mice induce hyperactivity. This chain is Conotoxin Tr6.3, found in Conus terebra (Sea snail).